An 84-amino-acid chain; its full sequence is U2-theraphotoxin-Cg1b 1 (84 aa).

Positions 1-21 are cleaved as a signal peptide; the sequence is MKVSVLITLAVWGVMFLLTSA. Positions 22 to 48 are excised as a propeptide; it reads QERGSDQMDSPAWLKSMERIFQSEERE. Intrachain disulfides connect C49–C63, C56–C68, and C62–C76.

It belongs to the neurotoxin 10 (Hwtx-1) family. 06 (F4b) subfamily. As to expression, expressed by the venom gland.

It localises to the secreted. In terms of biological role, probable ion channel inhibitor. This chain is U2-theraphotoxin-Cg1b 1, found in Chilobrachys guangxiensis (Chinese earth tiger tarantula).